The chain runs to 226 residues: Nucleoside triphosphate pyrophosphatase (226 aa).

The active-site Proton acceptor is the aspartate 79. Residues 204-226 (WSRGTSTHPTPGTSATPKPNPGA) are disordered. Residues 206 to 220 (RGTSTHPTPGTSATP) are compositionally biased toward polar residues.

This sequence belongs to the Maf family. A divalent metal cation serves as cofactor.

The protein localises to the cytoplasm. The enzyme catalyses a ribonucleoside 5'-triphosphate + H2O = a ribonucleoside 5'-phosphate + diphosphate + H(+). The catalysed reaction is a 2'-deoxyribonucleoside 5'-triphosphate + H2O = a 2'-deoxyribonucleoside 5'-phosphate + diphosphate + H(+). In terms of biological role, nucleoside triphosphate pyrophosphatase. May have a dual role in cell division arrest and in preventing the incorporation of modified nucleotides into cellular nucleic acids. This is Nucleoside triphosphate pyrophosphatase from Salinispora tropica (strain ATCC BAA-916 / DSM 44818 / JCM 13857 / NBRC 105044 / CNB-440).